The chain runs to 859 residues: Protein O-mannosyl-transferase Tmtc1 (859 aa).

The Cytoplasmic segment spans residues Met-1–Gly-22. The helical transmembrane segment at Leu-23–Val-43 threads the bilayer. At Tyr-44 to Pro-103 the chain is on the extracellular side. The chain crosses the membrane as a helical span at residues Leu-104–Val-124. Residues Ala-125 to Gly-134 lie on the Cytoplasmic side of the membrane. Transmembrane regions (helical) follow at residues Val-135–Gly-154 and Leu-155–Tyr-174. Residues Arg-175 to Thr-189 lie on the Cytoplasmic side of the membrane. A helical transmembrane segment spans residues Ile-190–Cys-210. Residues Gly-211 to Arg-245 are Extracellular-facing. Residues Ser-246–Pro-266 form a helical membrane-spanning segment. Topologically, residues Arg-267 to Arg-288 are cytoplasmic. The chain crosses the membrane as a helical span at residues Thr-289–Leu-309. Residues Ser-310 to Arg-328 are Extracellular-facing. The helical transmembrane segment at Asn-329–Leu-349 threads the bilayer. Over Arg-350–Thr-422 the chain is Cytoplasmic. The helical transmembrane segment at Ala-423–Met-443 threads the bilayer. The Extracellular segment spans residues Ala-444–Arg-446. Residues Val-447–Trp-467 traverse the membrane as a helical segment. Residues Gln-468–Ser-473 lie on the Cytoplasmic side of the membrane. Residues Trp-474–Val-493 form a helical membrane-spanning segment. Over Arg-494–Glu-859 the chain is Extracellular. TPR repeat units lie at residues Pro-518 to Met-551, Ala-552 to Leu-585, Ala-586 to Gly-620, Tyr-632 to Leu-665, Ala-671 to Gln-704, Gly-705 to Glu-739, Pro-740 to Asp-773, Tyr-774 to Ala-807, and Ala-808 to His-841. The N-linked (GlcNAc...) asparagine glycan is linked to Asn-567. Residue Asn-718 is glycosylated (N-linked (GlcNAc...) asparagine).

It belongs to the TMTC family.

Its subcellular location is the membrane. It localises to the endoplasmic reticulum. The catalysed reaction is a di-trans,poly-cis-dolichyl beta-D-mannosyl phosphate + L-seryl-[protein] = 3-O-(alpha-D-mannosyl)-L-seryl-[protein] + a di-trans,poly-cis-dolichyl phosphate + H(+). The enzyme catalyses a di-trans,poly-cis-dolichyl beta-D-mannosyl phosphate + L-threonyl-[protein] = 3-O-(alpha-D-mannosyl)-L-threonyl-[protein] + a di-trans,poly-cis-dolichyl phosphate + H(+). It functions in the pathway protein modification; protein glycosylation. Functionally, transfers mannosyl residues to the hydroxyl group of serine or threonine residues. The polypeptide is Protein O-mannosyl-transferase Tmtc1 (Drosophila melanogaster (Fruit fly)).